The primary structure comprises 248 residues: Phycocyanobilin:ferredoxin oxidoreductase (248 aa).

Belongs to the HY2 family.

It catalyses the reaction (2R,3Z)-phycocyanobilin + 4 oxidized [2Fe-2S]-[ferredoxin] = biliverdin IXalpha + 4 reduced [2Fe-2S]-[ferredoxin] + 4 H(+). Functionally, catalyzes the four-electron reduction of biliverdin IX-alpha (2-electron reduction at both the A and D rings); the reaction proceeds via an isolatable 2-electron intermediate, 181,182-dihydrobiliverdin. This chain is Phycocyanobilin:ferredoxin oxidoreductase (pcyA), found in Synechocystis sp. (strain ATCC 27184 / PCC 6803 / Kazusa).